We begin with the raw amino-acid sequence, 450 residues long: Probable glycosidase CRR1 (450 aa).

The first 17 residues, 1–17 (MSKRIIQLILLSAFARA), serve as a signal peptide directing secretion. The region spanning 67-347 (SPESCVPVPA…WENAPDIKAH (281 aa)) is the GH16 domain. Glu225 acts as the Nucleophile in catalysis. Glu229 (proton donor) is an active-site residue. The interval 428–450 (AQRQQHHRRSLPHVEAPPITNTM) is disordered.

This sequence belongs to the glycosyl hydrolase 16 family. CRR1 subfamily.

It is found in the spore wall. In terms of biological role, spore specific glycosidase involved in spore wall assembly during sporulation. May be involved in copper import. In Eremothecium gossypii (strain ATCC 10895 / CBS 109.51 / FGSC 9923 / NRRL Y-1056) (Yeast), this protein is Probable glycosidase CRR1 (CRR1).